Consider the following 180-residue polypeptide: ATP-dependent protease subunit HslV (180 aa).

Thr5 is a catalytic residue. Na(+) contacts are provided by Gly161, Cys164, and Thr167.

This sequence belongs to the peptidase T1B family. HslV subfamily. A double ring-shaped homohexamer of HslV is capped on each side by a ring-shaped HslU homohexamer. The assembly of the HslU/HslV complex is dependent on binding of ATP.

The protein localises to the cytoplasm. It carries out the reaction ATP-dependent cleavage of peptide bonds with broad specificity.. With respect to regulation, allosterically activated by HslU binding. Protease subunit of a proteasome-like degradation complex believed to be a general protein degrading machinery. This chain is ATP-dependent protease subunit HslV, found in Campylobacter jejuni subsp. jejuni serotype O:2 (strain ATCC 700819 / NCTC 11168).